The primary structure comprises 264 residues: Secretory carrier-associated membrane protein 4 (264 aa).

The disordered stretch occupies residues M1–P33. Residues M1 to A122 lie on the Cytoplasmic side of the membrane. Positions M51–F85 form a coiled coil. The next 4 helical transmembrane spans lie at S123–I143, I150–Y170, F185–A205, and I233–L253. At Q254 to K264 the chain is on the cytoplasmic side.

It belongs to the SCAMP family.

The protein resides in the cell membrane. It localises to the cytoplasmic vesicle. Its subcellular location is the secretory vesicle membrane. Probably involved in membrane trafficking. This Arabidopsis thaliana (Mouse-ear cress) protein is Secretory carrier-associated membrane protein 4 (SCAMP4).